We begin with the raw amino-acid sequence, 90 residues long: Co-chaperonin GroES (90 aa).

Belongs to the GroES chaperonin family. Heptamer of 7 subunits arranged in a ring. Interacts with the chaperonin GroEL.

The protein resides in the cytoplasm. In terms of biological role, together with the chaperonin GroEL, plays an essential role in assisting protein folding. The GroEL-GroES system forms a nano-cage that allows encapsulation of the non-native substrate proteins and provides a physical environment optimized to promote and accelerate protein folding. GroES binds to the apical surface of the GroEL ring, thereby capping the opening of the GroEL channel. The sequence is that of Co-chaperonin GroES from Bacteroides thetaiotaomicron (strain ATCC 29148 / DSM 2079 / JCM 5827 / CCUG 10774 / NCTC 10582 / VPI-5482 / E50).